The chain runs to 451 residues: Coproporphyrinogen III oxidase (451 aa).

Residues Gly-10–Gly-15, Asp-36–Pro-37, Gly-58–Ala-61, Val-242, Trp-393, and Ile-429–Val-431 each bind FAD.

The protein belongs to the protoporphyrinogen/coproporphyrinogen oxidase family. Coproporphyrinogen III oxidase subfamily. FAD is required as a cofactor.

The protein localises to the cytoplasm. The catalysed reaction is coproporphyrinogen III + 3 O2 = coproporphyrin III + 3 H2O2. Its pathway is porphyrin-containing compound metabolism; protoheme biosynthesis. In terms of biological role, involved in coproporphyrin-dependent heme b biosynthesis. Catalyzes the oxidation of coproporphyrinogen III to coproporphyrin III. The sequence is that of Coproporphyrinogen III oxidase from Mycobacterium leprae (strain TN).